The sequence spans 253 residues: uncharacterized protein (253 aa).

Residues isoleucine 17, serine 36, aspartate 62, asparagine 89, tyrosine 158, lysine 162, valine 191, and threonine 193 each coordinate NADP(+). The active-site Proton donor is tyrosine 158. Lysine 162 serves as the catalytic Lowers pKa of active site Tyr.

The protein belongs to the short-chain dehydrogenases/reductases (SDR) family.

It localises to the cytoplasm. It is found in the nucleus. This is an uncharacterized protein from Schizosaccharomyces pombe (strain 972 / ATCC 24843) (Fission yeast).